Here is a 483-residue protein sequence, read N- to C-terminus: Putative (R)-citramalate synthase CimA (483 aa).

Residues 1–245 form the Pyruvate carboxyltransferase domain; that stretch reads MRDGEQTPGV…DTGIKHEQIY (245 aa).

Belongs to the alpha-IPM synthase/homocitrate synthase family. As to quaternary structure, homodimer.

It catalyses the reaction pyruvate + acetyl-CoA + H2O = (3R)-citramalate + CoA + H(+). It functions in the pathway amino-acid biosynthesis; L-isoleucine biosynthesis; 2-oxobutanoate from pyruvate: step 1/3. Functionally, catalyzes the condensation of pyruvate and acetyl-coenzyme A to form (R)-citramalate. The protein is Putative (R)-citramalate synthase CimA of Methanosarcina acetivorans (strain ATCC 35395 / DSM 2834 / JCM 12185 / C2A).